The primary structure comprises 24 residues: Brevinin-1Pa (24 aa).

Cys18 and Cys24 are oxidised to a cystine.

As to expression, expressed by the skin glands.

It localises to the secreted. Its function is as follows. Antibacterial activity against Gram-positive bacterium S.aureus and Gram-negative bacterium E.coli. Has activity against C.albicans. This Lithobates pipiens (Northern leopard frog) protein is Brevinin-1Pa.